Here is a 310-residue protein sequence, read N- to C-terminus: Ribosomal RNA small subunit methyltransferase H (310 aa).

Residues Gly33–His35, Asp52, Phe79, Asp98, and Gln105 contribute to the S-adenosyl-L-methionine site.

The protein belongs to the methyltransferase superfamily. RsmH family.

It localises to the cytoplasm. It carries out the reaction cytidine(1402) in 16S rRNA + S-adenosyl-L-methionine = N(4)-methylcytidine(1402) in 16S rRNA + S-adenosyl-L-homocysteine + H(+). In terms of biological role, specifically methylates the N4 position of cytidine in position 1402 (C1402) of 16S rRNA. The sequence is that of Ribosomal RNA small subunit methyltransferase H from Campylobacter jejuni subsp. doylei (strain ATCC BAA-1458 / RM4099 / 269.97).